We begin with the raw amino-acid sequence, 249 residues long: 1-(5-phosphoribosyl)-5-[(5-phosphoribosylamino)methylideneamino] imidazole-4-carboxamide isomerase (249 aa).

D8 acts as the Proton acceptor in catalysis. Residue D129 is the Proton donor of the active site.

This sequence belongs to the HisA/HisF family.

Its subcellular location is the cytoplasm. The enzyme catalyses 1-(5-phospho-beta-D-ribosyl)-5-[(5-phospho-beta-D-ribosylamino)methylideneamino]imidazole-4-carboxamide = 5-[(5-phospho-1-deoxy-D-ribulos-1-ylimino)methylamino]-1-(5-phospho-beta-D-ribosyl)imidazole-4-carboxamide. The protein operates within amino-acid biosynthesis; L-histidine biosynthesis; L-histidine from 5-phospho-alpha-D-ribose 1-diphosphate: step 4/9. The polypeptide is 1-(5-phosphoribosyl)-5-[(5-phosphoribosylamino)methylideneamino] imidazole-4-carboxamide isomerase (Magnetococcus marinus (strain ATCC BAA-1437 / JCM 17883 / MC-1)).